A 500-amino-acid chain; its full sequence is Probable malate:quinone oxidoreductase (500 aa).

This sequence belongs to the MQO family. FAD serves as cofactor.

It catalyses the reaction (S)-malate + a quinone = a quinol + oxaloacetate. The protein operates within carbohydrate metabolism; tricarboxylic acid cycle; oxaloacetate from (S)-malate (quinone route): step 1/1. The chain is Probable malate:quinone oxidoreductase from Halalkalibacterium halodurans (strain ATCC BAA-125 / DSM 18197 / FERM 7344 / JCM 9153 / C-125) (Bacillus halodurans).